The sequence spans 171 residues: 3-hydroxydecanoyl-[acyl-carrier-protein] dehydratase (171 aa).

The active site involves H70.

Belongs to the thioester dehydratase family. FabA subfamily. Homodimer.

It localises to the cytoplasm. It carries out the reaction a (3R)-hydroxyacyl-[ACP] = a (2E)-enoyl-[ACP] + H2O. It catalyses the reaction (3R)-hydroxydecanoyl-[ACP] = (2E)-decenoyl-[ACP] + H2O. The catalysed reaction is (2E)-decenoyl-[ACP] = (3Z)-decenoyl-[ACP]. The protein operates within lipid metabolism; fatty acid biosynthesis. Functionally, necessary for the introduction of cis unsaturation into fatty acids. Catalyzes the dehydration of (3R)-3-hydroxydecanoyl-ACP to E-(2)-decenoyl-ACP and then its isomerization to Z-(3)-decenoyl-ACP. Can catalyze the dehydratase reaction for beta-hydroxyacyl-ACPs with saturated chain lengths up to 16:0, being most active on intermediate chain length. The chain is 3-hydroxydecanoyl-[acyl-carrier-protein] dehydratase from Hydrogenovibrio crunogenus (strain DSM 25203 / XCL-2) (Thiomicrospira crunogena).